A 282-amino-acid chain; its full sequence is MKNRVTVPEIIASKGKRKLSELTAYDYPTALWADQSGIDMLLVGDSLAMVVLGHDDTLSVGMTEMLHHTSAVARGAKRALVIGDMPFMSYQVSVEEALYNAGLFLKEAKAQAVKLEGGRRVAPQVKAMVEAGIPVQGHLGLTPQSSAQFGGFKIQGKTAEAAKILIEDAQILAEAGCFSIVLEGIPSNVAAMVTEAIPVPTIGIGAGPDCDGQVLVIHDVLGLYDRFVPKFVKKYAQLGLTIKEALTKYREEVENGTFPGPEHEFGMAELEAKKLSGLEDKK.

Residues aspartate 45 and aspartate 84 each contribute to the Mg(2+) site. 3-methyl-2-oxobutanoate is bound by residues 45–46 (DS), aspartate 84, and lysine 114. Position 116 (glutamate 116) interacts with Mg(2+). Glutamate 183 acts as the Proton acceptor in catalysis.

It belongs to the PanB family. Homodecamer; pentamer of dimers. Mg(2+) serves as cofactor.

It localises to the cytoplasm. It carries out the reaction 3-methyl-2-oxobutanoate + (6R)-5,10-methylene-5,6,7,8-tetrahydrofolate + H2O = 2-dehydropantoate + (6S)-5,6,7,8-tetrahydrofolate. It functions in the pathway cofactor biosynthesis; (R)-pantothenate biosynthesis; (R)-pantoate from 3-methyl-2-oxobutanoate: step 1/2. Functionally, catalyzes the reversible reaction in which hydroxymethyl group from 5,10-methylenetetrahydrofolate is transferred onto alpha-ketoisovalerate to form ketopantoate. This is 3-methyl-2-oxobutanoate hydroxymethyltransferase from Syntrophobacter fumaroxidans (strain DSM 10017 / MPOB).